The sequence spans 122 residues: Large ribosomal subunit protein uL14 (122 aa).

This sequence belongs to the universal ribosomal protein uL14 family. In terms of assembly, part of the 50S ribosomal subunit. Forms a cluster with proteins L3 and L19. In the 70S ribosome, L14 and L19 interact and together make contacts with the 16S rRNA in bridges B5 and B8.

Functionally, binds to 23S rRNA. Forms part of two intersubunit bridges in the 70S ribosome. This Limosilactobacillus fermentum (strain NBRC 3956 / LMG 18251) (Lactobacillus fermentum) protein is Large ribosomal subunit protein uL14.